The following is a 230-amino-acid chain: Ropporin-1-like protein (230 aa).

The region spanning 17–46 (PELPDILKQFTKAAIRTQPADVLRWSAGYF) is the RIIa domain.

The protein belongs to the ropporin family. As to quaternary structure, component of the axonemal radial spoke complex 1 (RS1), at least composed of spoke head proteins RSPH1, RSPH3, RSPH9 and the cilia-specific component RSPH4A or sperm-specific component RSPH6A, spoke stalk proteins RSPH14, DNAJB13, DYDC1, ROPN1L and NME5, and the anchor protein IQUB. Interacts with FSCB; the interaction increases upon spermatozoa capacitation conditions. May interact with AKAP3. Interacts with CFAP61. Sumoylated, sumoylation decreases upon spermatozoa capacitation conditions.

The protein localises to the cell projection. Its subcellular location is the cilium. It is found in the flagellum. Functions as part of axonemal radial spoke complexes that play an important part in the motility of sperm and cilia. Important for male fertility. With ROPN1, involved in fibrous sheath integrity and sperm motility, plays a role in PKA-dependent signaling processes required for spermatozoa capacitation. This chain is Ropporin-1-like protein (ROPN1L), found in Homo sapiens (Human).